We begin with the raw amino-acid sequence, 231 residues long: tRNA (guanine-N(1)-)-methyltransferase (231 aa).

Residues Gly-112 and 132–137 contribute to the S-adenosyl-L-methionine site; that span reads IGDYIL.

It belongs to the RNA methyltransferase TrmD family. Homodimer.

Its subcellular location is the cytoplasm. The enzyme catalyses guanosine(37) in tRNA + S-adenosyl-L-methionine = N(1)-methylguanosine(37) in tRNA + S-adenosyl-L-homocysteine + H(+). In terms of biological role, specifically methylates guanosine-37 in various tRNAs. This chain is tRNA (guanine-N(1)-)-methyltransferase, found in Sulfurimonas denitrificans (strain ATCC 33889 / DSM 1251) (Thiomicrospira denitrificans (strain ATCC 33889 / DSM 1251)).